Here is a 113-residue protein sequence, read N- to C-terminus: UPF0342 protein spyM18_0873 (113 aa).

The protein belongs to the UPF0342 family.

This is UPF0342 protein spyM18_0873 from Streptococcus pyogenes serotype M18 (strain MGAS8232).